Here is a 382-residue protein sequence, read N- to C-terminus: Lipoyl synthase, mitochondrial (382 aa).

The transit peptide at 1-30 (MHGRRHLAASLARALTYAPSRSISSTPSLL) directs the protein to the mitochondrion. Polar residues predominate over residues 25 to 34 (STPSLLQTLD). The segment at 25–47 (STPSLLQTLDPSTPSPAAAPPTA) is disordered. Residues C112, C117, C123, C143, C147, C150, and S359 each contribute to the [4Fe-4S] cluster site. The 221-residue stretch at 128–348 (ETGTATATIM…RSLGVDMGFR (221 aa)) folds into the Radical SAM core domain.

This sequence belongs to the radical SAM superfamily. Lipoyl synthase family. Requires [4Fe-4S] cluster as cofactor.

It localises to the mitochondrion. The enzyme catalyses [[Fe-S] cluster scaffold protein carrying a second [4Fe-4S](2+) cluster] + N(6)-octanoyl-L-lysyl-[protein] + 2 oxidized [2Fe-2S]-[ferredoxin] + 2 S-adenosyl-L-methionine + 4 H(+) = [[Fe-S] cluster scaffold protein] + N(6)-[(R)-dihydrolipoyl]-L-lysyl-[protein] + 4 Fe(3+) + 2 hydrogen sulfide + 2 5'-deoxyadenosine + 2 L-methionine + 2 reduced [2Fe-2S]-[ferredoxin]. It participates in protein modification; protein lipoylation via endogenous pathway; protein N(6)-(lipoyl)lysine from octanoyl-[acyl-carrier-protein]: step 2/2. Functionally, catalyzes the radical-mediated insertion of two sulfur atoms into the C-6 and C-8 positions of the octanoyl moiety bound to the lipoyl domains of lipoate-dependent enzymes, thereby converting the octanoylated domains into lipoylated derivatives. The protein is Lipoyl synthase, mitochondrial of Oryza sativa subsp. indica (Rice).